The chain runs to 439 residues: Proline--tRNA ligase (439 aa).

This sequence belongs to the class-II aminoacyl-tRNA synthetase family. ProS type 2 subfamily. In terms of assembly, homodimer.

The protein localises to the cytoplasm. The catalysed reaction is tRNA(Pro) + L-proline + ATP = L-prolyl-tRNA(Pro) + AMP + diphosphate. Catalyzes the attachment of proline to tRNA(Pro) in a two-step reaction: proline is first activated by ATP to form Pro-AMP and then transferred to the acceptor end of tRNA(Pro). This Parvibaculum lavamentivorans (strain DS-1 / DSM 13023 / NCIMB 13966) protein is Proline--tRNA ligase.